The sequence spans 326 residues: Adenosine receptor A1 (326 aa).

Topologically, residues 1 to 10 are extracellular; sequence MPPYISAFQA. The chain crosses the membrane as a helical span at residues 11–33; the sequence is AYIGIEVLIALVSVPGNVLVIWA. Topologically, residues 34–46 are cytoplasmic; it reads VKVNQALRDATFC. Residues 47 to 69 traverse the membrane as a helical segment; the sequence is FIVSLAVADVAVGALVIPLAILI. At 70–80 the chain is on the extracellular side; that stretch reads NIGPQTYFHTC. A disulfide bridge connects residues Cys-80 and Cys-169. Residues 81 to 102 form a helical membrane-spanning segment; the sequence is LMVACPVLILTQSSILALLAIA. Residues 103–123 are Cytoplasmic-facing; that stretch reads VDRYLRVKIPLRYKTVVTQRR. A helical transmembrane segment spans residues 124 to 146; it reads AAVAIAGCWILSLVVGLTPMFGW. The Extracellular portion of the chain corresponds to 147–176; that stretch reads NNLSEVEQAWIANGSVGEPVIKCEFEKVIS. Asn-148 and Asn-159 each carry an N-linked (GlcNAc...) asparagine glycan. Residues 177–201 form a helical membrane-spanning segment; sequence MEYMVYFNFFVWVLPPLLLMVLIYL. Topologically, residues 202–235 are cytoplasmic; that stretch reads EVFYLIRKQLNKKVSASSGDPQKYYGKELKIAKS. Residues 236 to 259 traverse the membrane as a helical segment; the sequence is LALILFLFALSWLPLHILNCITLF. The Extracellular segment spans residues 260–267; the sequence is CPTCQKPS. Residues 268 to 292 traverse the membrane as a helical segment; it reads ILIYIAIFLTHGNSAMNPIVYAFRI. Residues 293 to 326 are Cytoplasmic-facing; the sequence is HKFRVTFLKIWNDHFRCQPKPPIEEDIPEEKADD. Residue Cys-309 is the site of S-palmitoyl cysteine attachment.

The protein belongs to the G-protein coupled receptor 1 family.

It localises to the cell membrane. Functionally, receptor for adenosine. The activity of this receptor is mediated by G proteins which inhibit adenylyl cyclase. This Mus musculus (Mouse) protein is Adenosine receptor A1 (Adora1).